The chain runs to 429 residues: Protein phosphatase 2C homolog 2 (429 aa).

The region spanning 16–291 (LYGLSAMQGW…DNMTMIIIGL (276 aa)) is the PPM-type phosphatase domain. Residues Asp64, Gly65, Asp233, and Asp282 each contribute to the Mn(2+) site. 2 disordered regions span residues 320-348 (YGKS…NDRS) and 384-429 (RDVT…SASS). The span at 384 to 397 (RDVTNHLQHDKAEE) shows a compositional bias: basic and acidic residues. A compositionally biased stretch (low complexity) spans 405–419 (SESPSSANKNSSGSG).

It belongs to the PP2C family. It depends on Mg(2+) as a cofactor. Requires Mn(2+) as cofactor.

Its subcellular location is the cytoplasm. The protein resides in the nucleus. It catalyses the reaction O-phospho-L-seryl-[protein] + H2O = L-seryl-[protein] + phosphate. The catalysed reaction is O-phospho-L-threonyl-[protein] + H2O = L-threonyl-[protein] + phosphate. Its function is as follows. Dephosphorylating regulator for many key proteins. Dephosphorylates sakA, to negatively regulate the stress-activated p38MAPK cascade. This is Protein phosphatase 2C homolog 2 from Aspergillus fumigatus (strain ATCC MYA-4609 / CBS 101355 / FGSC A1100 / Af293) (Neosartorya fumigata).